The sequence spans 103 residues: Integration host factor subunit alpha (103 aa).

The tract at residues 51–73 (FGNFQLRDKPQRPGRNPKTGEEI) is disordered.

The protein belongs to the bacterial histone-like protein family. In terms of assembly, heterodimer of an alpha and a beta chain.

Functionally, this protein is one of the two subunits of integration host factor, a specific DNA-binding protein that functions in genetic recombination as well as in transcriptional and translational control. This chain is Integration host factor subunit alpha, found in Azoarcus sp. (strain BH72).